A 171-amino-acid polypeptide reads, in one-letter code: Shikimate kinase (171 aa).

14 to 19 (GAGKST) contributes to the ATP binding site. Mg(2+) is bound at residue serine 18. The substrate site is built by aspartate 36, arginine 60, and glycine 82. ATP is bound at residue arginine 120. Arginine 139 is a binding site for substrate. An ATP-binding site is contributed by glutamine 156.

It belongs to the shikimate kinase family. Monomer. Mg(2+) serves as cofactor.

Its subcellular location is the cytoplasm. The enzyme catalyses shikimate + ATP = 3-phosphoshikimate + ADP + H(+). Its pathway is metabolic intermediate biosynthesis; chorismate biosynthesis; chorismate from D-erythrose 4-phosphate and phosphoenolpyruvate: step 5/7. In terms of biological role, catalyzes the specific phosphorylation of the 3-hydroxyl group of shikimic acid using ATP as a cosubstrate. The sequence is that of Shikimate kinase from Shewanella denitrificans (strain OS217 / ATCC BAA-1090 / DSM 15013).